A 479-amino-acid polypeptide reads, in one-letter code: MAQHTVYFPDAFLTQMREAMPSTLSFDDFLAACQRPLRRSIRVNTLKISVADFLQLTAPYGWTLTPIPWCEEGFWIERDNEDALPLGSTAEHLSGLFYIQEASSMLPVAALFADGNAPQRVMDVAAAPGSKTTQIAARMNNEGAILANEFSASRVKVLHANISRCGISNVALTHFDGRVFGAALPEMFDAILLDAPCSGEGVVRKDPDALKNWSPESNQEIAATQRELIDSAFHALRPGGTLVYSTCTLNREENEAVCLWLKETYPDAVEFLPLGDLFPGANKALTEEGFLHVFPQIYDCEGFFVARLRKTQAIPVLPAPKYKVGNFPFSPVKDREAGQIRQAAAGVGLNWDGNLRLWQRDKELWLFPVGIEALIGKVRFSRLGIKLAETHNKGYRWQHEAVIALASPDNVNAFELTPQEAEEWYRGRDVYPQAAPVADDVLVTFQHQPIGLAKRIGSRLKNSYPRELVRDGKLFTGNA.

Residues 125–131 (AAAPGSK), glutamate 149, aspartate 176, and aspartate 194 each bind S-adenosyl-L-methionine. The active-site Nucleophile is cysteine 247.

This sequence belongs to the class I-like SAM-binding methyltransferase superfamily. RsmB/NOP family.

Its subcellular location is the cytoplasm. It carries out the reaction cytidine(1407) in 16S rRNA + S-adenosyl-L-methionine = 5-methylcytidine(1407) in 16S rRNA + S-adenosyl-L-homocysteine + H(+). In terms of biological role, specifically methylates the cytosine at position 1407 (m5C1407) of 16S rRNA. The chain is Ribosomal RNA small subunit methyltransferase F from Escherichia coli O7:K1 (strain IAI39 / ExPEC).